A 253-amino-acid polypeptide reads, in one-letter code: Uridylate kinase (253 aa).

Residue 26 to 29 coordinates ATP; that stretch reads KLSG. Glycine 68 provides a ligand contact to UMP. The ATP site is built by glycine 69 and arginine 73. UMP-binding positions include aspartate 88 and 149–156; that span reads TGNPFFTT. Positions 176, 182, and 185 each coordinate ATP.

It belongs to the UMP kinase family. Homohexamer.

The protein localises to the cytoplasm. It carries out the reaction UMP + ATP = UDP + ADP. It participates in pyrimidine metabolism; CTP biosynthesis via de novo pathway; UDP from UMP (UMPK route): step 1/1. Inhibited by UTP. Functionally, catalyzes the reversible phosphorylation of UMP to UDP. This Chromohalobacter salexigens (strain ATCC BAA-138 / DSM 3043 / CIP 106854 / NCIMB 13768 / 1H11) protein is Uridylate kinase.